The primary structure comprises 290 residues: Ribosomal protein L11 methyltransferase (290 aa).

S-adenosyl-L-methionine is bound by residues Thr-135, Gly-158, Asp-180, and Asn-227.

Belongs to the methyltransferase superfamily. PrmA family.

It is found in the cytoplasm. It catalyses the reaction L-lysyl-[protein] + 3 S-adenosyl-L-methionine = N(6),N(6),N(6)-trimethyl-L-lysyl-[protein] + 3 S-adenosyl-L-homocysteine + 3 H(+). Methylates ribosomal protein L11. In Chelativorans sp. (strain BNC1), this protein is Ribosomal protein L11 methyltransferase.